A 139-amino-acid chain; its full sequence is MANAASGMAVHDDCKLRFLELKAKRTHRFIVYKIEEKQKQVVVEKIGEPTESYEDFAASLPENECRYAVYDFDFVTAENCQKSRIFFIAWCPDTARVRSKMIYASSKDRFKRELDGIQVELQACDPTEMGLDVIQSRAN.

Residues 5-139 (ASGMAVHDDC…GLDVIQSRAN (135 aa)) enclose the ADF-H domain.

Belongs to the actin-binding proteins ADF family.

Actin-depolymerizing protein. Severs actin filaments (F-actin) and binds to actin monomers. This is Actin-depolymerizing factor 1 (ADF1) from Petunia hybrida (Petunia).